The primary structure comprises 126 residues: Methylglyoxal synthase (126 aa).

Residues 1 to 126 form the MGS-like domain; it reads MAERQKIALI…ADRLLPVITE (126 aa). Substrate-binding positions include His-12, Lys-16, 38-41, and 59-60; these read TGTT and SG. Asp-65 (proton donor/acceptor) is an active-site residue. Residue His-92 participates in substrate binding.

It belongs to the methylglyoxal synthase family.

It catalyses the reaction dihydroxyacetone phosphate = methylglyoxal + phosphate. In terms of biological role, catalyzes the formation of methylglyoxal from dihydroxyacetone phosphate. This Allorhizobium ampelinum (strain ATCC BAA-846 / DSM 112012 / S4) (Agrobacterium vitis (strain S4)) protein is Methylglyoxal synthase.